The primary structure comprises 282 residues: 1,4-dihydroxy-6-naphtoate synthase (282 aa).

Substrate is bound by residues Lys-57–Ser-59 and Thr-109–Ala-110. His-153 functions as the Proton acceptor in the catalytic mechanism.

Belongs to the MqnA/MqnD family. MqnD subfamily.

It catalyses the reaction cyclic dehypoxanthinylfutalosinate = 1,4-dihydroxy-6-naphthoate + dihydroxyacetone. Its pathway is quinol/quinone metabolism; menaquinone biosynthesis. In terms of biological role, catalyzes the conversion of cyclic dehypoxanthine futalosine (cyclic DHFL) into 1,4-dihydroxy-6-naphthoate, a step in the biosynthesis of menaquinone (MK, vitamin K2). This is 1,4-dihydroxy-6-naphtoate synthase from Streptomyces coelicolor (strain ATCC BAA-471 / A3(2) / M145).